The following is a 351-amino-acid chain: tRNA pseudouridine synthase D (351 aa).

Residue D81 is the Nucleophile of the active site. The TRUD domain maps to 158 to 304 (GVPNYFGSQR…MRHERRAIEL (147 aa)).

Belongs to the pseudouridine synthase TruD family.

The enzyme catalyses uridine(13) in tRNA = pseudouridine(13) in tRNA. Its function is as follows. Responsible for synthesis of pseudouridine from uracil-13 in transfer RNAs. The protein is tRNA pseudouridine synthase D of Aliivibrio fischeri (strain MJ11) (Vibrio fischeri).